Here is a 528-residue protein sequence, read N- to C-terminus: Chromosomal replication initiator protein DnaA (528 aa).

The tract at residues 1-104 is domain I, interacts with DnaA modulators; the sequence is MNDDPNALAR…PVDDEPESDP (104 aa). The interval 95 to 158 is disordered; it reads PVDDEPESDP…TDFEEVDDDR (64 aa). Over residues 104–123 the composition is skewed to basic and acidic residues; the sequence is PPSRDHRPEPEPLHTPRHLE. The segment at 105–187 is domain II; it reads PSRDHRPEPE…GPAPSATGGN (83 aa). Acidic residues predominate over residues 149–158; that stretch reads TDFEEVDDDR. Residues 188–404 are domain III, AAA+ region; sequence SLNAKYTFDT…GALIRVTAFA (217 aa). Residues G232, G234, K235, and T236 each contribute to the ATP site. Residues 405 to 528 are domain IV, binds dsDNA; sequence SLNRQPLDLT…TARIKQRSKR (124 aa).

Belongs to the DnaA family. As to quaternary structure, oligomerizes as a right-handed, spiral filament on DNA at oriC.

It is found in the cytoplasm. Functionally, plays an essential role in the initiation and regulation of chromosomal replication. ATP-DnaA binds to the origin of replication (oriC) to initiate formation of the DNA replication initiation complex once per cell cycle. Binds the DnaA box (a 9 base pair repeat at the origin) and separates the double-stranded (ds)DNA. Forms a right-handed helical filament on oriC DNA; dsDNA binds to the exterior of the filament while single-stranded (ss)DNA is stabiized in the filament's interior. The ATP-DnaA-oriC complex binds and stabilizes one strand of the AT-rich DNA unwinding element (DUE), permitting loading of DNA polymerase. After initiation quickly degrades to an ADP-DnaA complex that is not apt for DNA replication. Binds acidic phospholipids. In Rhodococcus jostii (strain RHA1), this protein is Chromosomal replication initiator protein DnaA.